A 144-amino-acid polypeptide reads, in one-letter code: 3-hydroxyacyl-[acyl-carrier-protein] dehydratase FabZ (144 aa).

The active site involves His-51.

It belongs to the thioester dehydratase family. FabZ subfamily.

Its subcellular location is the cytoplasm. It carries out the reaction a (3R)-hydroxyacyl-[ACP] = a (2E)-enoyl-[ACP] + H2O. Involved in unsaturated fatty acids biosynthesis. Catalyzes the dehydration of short chain beta-hydroxyacyl-ACPs and long chain saturated and unsaturated beta-hydroxyacyl-ACPs. This chain is 3-hydroxyacyl-[acyl-carrier-protein] dehydratase FabZ (fabZ2), found in Lactococcus lactis subsp. lactis (strain IL1403) (Streptococcus lactis).